A 60-amino-acid polypeptide reads, in one-letter code: Large ribosomal subunit protein uL30 (60 aa).

The protein belongs to the universal ribosomal protein uL30 family. In terms of assembly, part of the 50S ribosomal subunit.

The polypeptide is Large ribosomal subunit protein uL30 (Desulforapulum autotrophicum (strain ATCC 43914 / DSM 3382 / VKM B-1955 / HRM2) (Desulfobacterium autotrophicum)).